We begin with the raw amino-acid sequence, 132 residues long: Small ribosomal subunit protein uS8 (132 aa).

This sequence belongs to the universal ribosomal protein uS8 family. In terms of assembly, part of the 30S ribosomal subunit. Contacts proteins S5 and S12.

Its function is as follows. One of the primary rRNA binding proteins, it binds directly to 16S rRNA central domain where it helps coordinate assembly of the platform of the 30S subunit. This chain is Small ribosomal subunit protein uS8, found in Bartonella henselae (strain ATCC 49882 / DSM 28221 / CCUG 30454 / Houston 1) (Rochalimaea henselae).